The primary structure comprises 862 residues: Interleukin-12 receptor subunit beta-2 (862 aa).

A signal peptide spans 1–23 (MAHTFRGCSLAFMFIITWLLIKA). Residues 24 to 622 (KIDACKRGDV…REFCLQGKAN (599 aa)) are Extracellular-facing. N-linked (GlcNAc...) asparagine glycosylation is found at Asn-48, Asn-129, Asn-166, Asn-195, and Asn-271. Fibronectin type-III domains are found at residues 126-221 (QPQN…FLDI), 226-319 (PPWD…TPEE), 320-419 (EPTG…LCEA), 423-520 (APRQ…KHKA), and 521-620 (PLSG…LQGK). Residues 305 to 309 (WSDWS) carry the WSXWS motif motif. Residues Asn-347, Asn-376, and Asn-480 are each glycosylated (N-linked (GlcNAc...) asparagine). A helical membrane pass occupies residues 623–643 (WMAFVAPSICIAIIMVGIFST). At 644–862 (HYFQQKVFVL…LKMRCDSLML (219 aa)) the chain is on the cytoplasmic side. The Box 1 motif signature appears at 662-670 (CSREIPDPA). The interval 725 to 755 (NWPQREKGIQGHQASEKDMMHSASSPPPPRA) is disordered. Residues 728–744 (QREKGIQGHQASEKDMM) show a composition bias toward basic and acidic residues. The segment at 796–801 (THDGYL) is required for STAT4 binding. A Phosphotyrosine modification is found at Tyr-800.

This sequence belongs to the type I cytokine receptor family. Type 2 subfamily. As to quaternary structure, heterodimer/heterooligomer; disulfide-linked. The functional high affinity IL12 receptor is composed of I12RB1 and IL12RB2. Il12RB2 binds JAK2 (via its N-terminal) through a membrane-proximal region of the cytoplasmic domain. Interaction, in vitro and in vivo, with SOCS3 (via its SH2 domain) inhibits the STAT4-mediated activation. Binds STAT4 through a membrane-distal C-terminal region. On IL12 binding, phosphorylated on C-terminal tyrosine residues by JAK2. Phosphorylation on Tyr-800 is required for STAT4 binding and activation, and for SOCS3 binding. Isoform 2 is expressed at similar levels in both naive and activated T-cells.

The protein localises to the membrane. Receptor for interleukin-12. This subunit is the signaling component coupling to the JAK2/STAT4 pathway. Promotes the proliferation of T-cells as well as NK cells. Induces the promotion of T-cells towards the Th1 phenotype by strongly enhancing IFN-gamma production. This Homo sapiens (Human) protein is Interleukin-12 receptor subunit beta-2 (IL12RB2).